A 638-amino-acid polypeptide reads, in one-letter code: Probable inactive receptor kinase At4g23740 (638 aa).

Positions Met1–Ser24 are cleaved as a signal peptide. LRR repeat units follow at residues Ala94–Lys117, Asp118–Val139, Asn142–Lys165, Arg166–Ser188, and Ser189–Asn198. Residues Val257–Leu277 form a helical membrane-spanning segment. The Protein kinase domain occupies Arg337–Val608. Residue Ser339 is modified to Phosphoserine. ATP is bound at residue Leu343–Thr351. At Thr360 the chain carries Phosphothreonine. Lys365 provides a ligand contact to ATP. Ser416 and Ser419 each carry phosphoserine. 2 positions are modified to phosphothreonine: Thr436 and Thr509. Phosphoserine is present on Ser513. A disordered region spans residues Arg612–Ile638. A compositionally biased stretch (basic and acidic residues) spans Thr613–Ser625. The segment covering Asn627–Ile638 has biased composition (polar residues).

Belongs to the protein kinase superfamily.

The protein localises to the membrane. The sequence is that of Probable inactive receptor kinase At4g23740 from Arabidopsis thaliana (Mouse-ear cress).